The chain runs to 318 residues: DNA repair nuclease/redox regulator APEX1 (318 aa).

The tract at residues 1–33 is necessary for interaction with YBX1, binding to RNA, association together with NPM1 to rRNA, endoribonuclease activity on abasic RNA and localization in the nucleoli; the sequence is MPKRGKKGAVAEDGDELKTEPEAKKSKTTAKKN. Residues 1–60 are disordered; the sequence is MPKRGKKGAVAEDGDELKTEPEAKKSKTTAKKNDKEAAGEGPALYEDPPDQKTSPSGKPA. Residues lysine 6 and lysine 7 each carry the N6-acetyllysine; by EP300 modification. Positions 8-13 match the Nuclear localization signal (NLS) motif; that stretch reads GAVAED. The segment covering 16-38 has biased composition (basic and acidic residues); that stretch reads ELKTEPEAKKSKTTAKKNDKEAA. A necessary for interaction with NPM1 and for efficient rRNA binding region spans residues 23–33; the sequence is AKKSKTTAKKN. N6-acetyllysine is present on residues lysine 27, lysine 31, lysine 32, and lysine 35. Residue serine 54 is modified to Phosphoserine. A Nuclear export signal (NES) motif is present at residues 64 to 80; that stretch reads ICSWNVDGLRAWIKKKG. At cysteine 65 the chain carries S-nitrosocysteine; alternate. Cysteine 65 and cysteine 93 form a disulfide bridge. Aspartate 70 is a binding site for Mg(2+). The residue at position 93 (cysteine 93) is an S-nitrosocysteine; alternate. Glutamate 96 serves as a coordination point for Mg(2+). The active site involves tyrosine 171. Position 197 is an N6-acetyllysine (lysine 197). Residues aspartate 210 and asparagine 212 each contribute to the Mg(2+) site. The active-site Proton donor/acceptor is aspartate 210. A Phosphothreonine; by CDK5 modification is found at threonine 233. The segment at 289-318 is mitochondrial targeting sequence (MTS); that stretch reads HSLLTALCDSKIRSKALGSDHCPITLYLAL. Aspartate 308 contacts Mg(2+). Cysteine 310 carries the post-translational modification S-nitrosocysteine.

It belongs to the DNA repair enzymes AP/ExoA family. As to quaternary structure, monomer. Homodimer; disulfide-linked. Component of the SET complex, composed of at least APEX1, SET, ANP32A, HMGB2, NME1 and TREX1. Associates with the dimer XRCC5/XRCC6 in a DNA-dependent manner. Interacts with SIRT1; the interaction is increased in the context of genotoxic stress. Interacts with HDAC1, HDAC2 and HDAC3; the interactions are not dependent on the APEX1 acetylation status. Interacts with XRCC1; the interaction is induced by SIRT1 and increased with the APEX1 acetylated form. Interacts with NPM1 (via N-terminal domain); the interaction is RNA-dependent and decreases in hydrogen peroxide-damaged cells. Interacts (via N-terminus) with YBX1 (via C-terminus); the interaction is increased in presence of APEX1 acetylated at Lys-6 and Lys-7. Interacts with HNRNPL; the interaction is DNA-dependent. Interacts (via N-terminus) with KPNA1 and KPNA2. Interacts with TXN; the interaction stimulates the FOS/JUN AP-1 complex DNA-binding activity in a redox-dependent manner. Interacts with GZMA, KRT8, MDM2, POLB, PRDX6, PRPF19, RPLP0, TOMM20 and WDR77. Binds to CDK5. It depends on Mg(2+) as a cofactor. Mn(2+) serves as cofactor. In terms of processing, phosphorylated. Phosphorylation by kinase PKC or casein kinase CK2 results in enhanced redox activity that stimulates binding of the FOS/JUN AP-1 complex to its cognate binding site. AP-endodeoxyribonuclease activity is not affected by CK2-mediated phosphorylation. Phosphorylation of Thr-233 by CDK5 in response to MPP(+)/MPTP (1-methyl-4-phenylpyridinium) reduces AP-endodeoxyribonuclease activity resulting in accumulation of DNA damage and contributing to neuronal death. Acetylated on Lys-6 and Lys-7. Acetylation is increased by the transcriptional coactivator EP300 acetyltransferase, genotoxic agents like H(2)O(2) and methyl methanesulfonate (MMS). Acetylation increases its binding affinity to the negative calcium response element (nCaRE) DNA promoter. The acetylated form induces a stronger binding of YBX1 to the Y-box sequence in the MDR1 promoter than the unacetylated form. Deacetylated on lysines. Lys-6 and Lys-7 are deacetylated by SIRT1. Post-translationally, cleaved at Lys-31 by granzyme A to create the mitochondrial form; leading in reduction of binding to DNA, AP endodeoxyribonuclease activity, redox activation of transcription factors and to enhanced cell death. Cleaved by granzyme K; leading to intracellular ROS accumulation and enhanced cell death after oxidative stress. In terms of processing, cys-69 and Cys-93 are nitrosylated in response to nitric oxide (NO) and lead to the exposure of the nuclear export signal (NES). Ubiquitinated by MDM2; leading to translocation to the cytoplasm and proteasomal degradation.

The protein localises to the nucleus. It is found in the nucleolus. It localises to the nucleus speckle. Its subcellular location is the endoplasmic reticulum. The protein resides in the cytoplasm. The protein localises to the mitochondrion. The catalysed reaction is a deoxyribonucleotide-2'-deoxyribose-5'-monophosphate-DNA + H2O = a 5'-end 2'-deoxyribose-5'-monophosphate-DNA + a 3'-end 2'-deoxyribonucleotide-DNA + H(+). It carries out the reaction Exonucleolytic cleavage in the 3'- to 5'-direction to yield nucleoside 5'-phosphates.. It catalyses the reaction a 3'-end 2'-deoxyribonucleotide-3'-phosphoglycolate-DNA + H2O = 2-phosphoglycolate + a 3'-end 2'-deoxyribonucleotide-DNA + H(+). The enzyme catalyses a 3'-end 2'-deoxyribonucleotide-8-oxoguanine-DNA + H2O = 8-oxo-dGMP + a 3'-end 2'-deoxyribonucleotide-DNA + H(+). Its activity is regulated as follows. NPM1 stimulates endodeoxyribonuclease activity on double-stranded DNA with AP sites, but inhibits endoribonuclease activity on single-stranded RNA containing AP sites. Functionally, multifunctional protein that plays a central role in the cellular response to oxidative stress. The two major activities of APEX1 are DNA repair and redox regulation of transcriptional factors. Functions as an apurinic/apyrimidinic (AP) endodeoxyribonuclease in the base excision repair (BER) pathway of DNA lesions induced by oxidative and alkylating agents. Initiates repair of AP sites in DNA by catalyzing hydrolytic incision of the phosphodiester backbone immediately adjacent to the damage, generating a single-strand break with 5'-deoxyribose phosphate and 3'-hydroxyl ends. Also incises at AP sites in the DNA strand of DNA/RNA hybrids, single-stranded DNA regions of R-loop structures, and single-stranded RNA molecules. Operates at switch sites of immunoglobulin (Ig) constant regions where it mediates Ig isotype class switch recombination. Processes AP sites induced by successive action of AICDA and UNG. Generates staggered nicks in opposite DNA strands resulting in the formation of double-strand DNA breaks that are finally resolved via non-homologous end joining repair pathway. Has 3'-5' exodeoxyribonuclease activity on mismatched deoxyribonucleotides at the 3' termini of nicked or gapped DNA molecules during short-patch BER. Possesses DNA 3' phosphodiesterase activity capable of removing lesions (such as phosphoglycolate and 8-oxoguanine) blocking the 3' side of DNA strand breaks. Also acts as an endoribonuclease involved in the control of single-stranded RNA metabolism. Plays a role in regulating MYC mRNA turnover by preferentially cleaving in between UA and CA dinucleotides of the MYC coding region determinant (CRD). In association with NMD1, plays a role in the rRNA quality control process during cell cycle progression. Acts as a loading factor for POLB onto non-incised AP sites in DNA and stimulates the 5'-terminal deoxyribose 5'-phosphate (dRp) excision activity of POLB. Exerts reversible nuclear redox activity to regulate DNA binding affinity and transcriptional activity of transcriptional factors by controlling the redox status of their DNA-binding domain, such as the FOS/JUN AP-1 complex after exposure to IR. Involved in calcium-dependent down-regulation of parathyroid hormone (PTH) expression by binding to negative calcium response elements (nCaREs). Together with HNRNPL or the dimer XRCC5/XRCC6, associates with nCaRE, acting as an activator of transcriptional repression. May also play a role in the epigenetic regulation of gene expression by participating in DNA demethylation. Stimulates the YBX1-mediated MDR1 promoter activity, when acetylated at Lys-6 and Lys-7, leading to drug resistance. Plays a role in protection from granzyme-mediated cellular repair leading to cell death. Binds DNA and RNA. Associates, together with YBX1, on the MDR1 promoter. Together with NPM1, associates with rRNA. The sequence is that of DNA repair nuclease/redox regulator APEX1 (APEX1) from Pongo pygmaeus (Bornean orangutan).